The sequence spans 182 residues: Isopentenyl-diphosphate Delta-isomerase (182 aa).

Positions 25 and 32 each coordinate Mn(2+). The region spanning 30–164 is the Nudix hydrolase domain; the sequence is LLHLAFSSWL…PWAFSPWMVM (135 aa). The active site involves Cys67. His69 lines the Mn(2+) pocket. Glu87 is a binding site for Mg(2+). The Mn(2+) site is built by Glu114 and Glu116. Glu116 is a catalytic residue.

It belongs to the IPP isomerase type 1 family. As to quaternary structure, homodimer. Requires Mg(2+) as cofactor. Mn(2+) is required as a cofactor.

It is found in the cytoplasm. The catalysed reaction is isopentenyl diphosphate = dimethylallyl diphosphate. It participates in isoprenoid biosynthesis; dimethylallyl diphosphate biosynthesis; dimethylallyl diphosphate from isopentenyl diphosphate: step 1/1. Its function is as follows. Catalyzes the 1,3-allylic rearrangement of the homoallylic substrate isopentenyl (IPP) to its highly electrophilic allylic isomer, dimethylallyl diphosphate (DMAPP). The sequence is that of Isopentenyl-diphosphate Delta-isomerase from Escherichia coli O9:H4 (strain HS).